A 144-amino-acid chain; its full sequence is Large ribosomal subunit protein uL15 (144 aa).

The segment at 1 to 50 (MRLNTLSPAAGAKSAKKRVGRGIGSGLGKTGGRGVKGAGSRSGGGVRAGF) is disordered. The span at 21–50 (RGIGSGLGKTGGRGVKGAGSRSGGGVRAGF) shows a compositional bias: gly residues.

The protein belongs to the universal ribosomal protein uL15 family. As to quaternary structure, part of the 50S ribosomal subunit.

In terms of biological role, binds to the 23S rRNA. The chain is Large ribosomal subunit protein uL15 from Tolumonas auensis (strain DSM 9187 / NBRC 110442 / TA 4).